Reading from the N-terminus, the 348-residue chain is Holliday junction branch migration complex subunit RuvB (348 aa).

Residues 1–10 show a composition bias toward low complexity; the sequence is MAIVSSSSGR. Positions 1-37 are disordered; the sequence is MAIVSSSSGRKPPRRPEALMDPQQAPEEVVSRPEDKL. A large ATPase domain (RuvB-L) region spans residues 13-198; that stretch reads PRRPEALMDP…FGLIQRLEFY (186 aa). Residues Leu37, Arg38, Gly79, Lys82, Thr83, Thr84, Arg188, Tyr198, and Arg235 each contribute to the ATP site. Thr83 contributes to the Mg(2+) binding site. The interval 199 to 271 is small ATPAse domain (RuvB-S); that stretch reads GQGDLEAIVE…LVGEALSLHR (73 aa). The segment at 274–348 is head domain (RuvB-H); that stretch reads HRGLDASDRR…AARSHLAEAA (75 aa). DNA-binding residues include Arg329 and Arg334.

It belongs to the RuvB family. Homohexamer. Forms an RuvA(8)-RuvB(12)-Holliday junction (HJ) complex. HJ DNA is sandwiched between 2 RuvA tetramers; dsDNA enters through RuvA and exits via RuvB. An RuvB hexamer assembles on each DNA strand where it exits the tetramer. Each RuvB hexamer is contacted by two RuvA subunits (via domain III) on 2 adjacent RuvB subunits; this complex drives branch migration. In the full resolvosome a probable DNA-RuvA(4)-RuvB(12)-RuvC(2) complex forms which resolves the HJ.

It localises to the cytoplasm. It catalyses the reaction ATP + H2O = ADP + phosphate + H(+). Functionally, the RuvA-RuvB-RuvC complex processes Holliday junction (HJ) DNA during genetic recombination and DNA repair, while the RuvA-RuvB complex plays an important role in the rescue of blocked DNA replication forks via replication fork reversal (RFR). RuvA specifically binds to HJ cruciform DNA, conferring on it an open structure. The RuvB hexamer acts as an ATP-dependent pump, pulling dsDNA into and through the RuvAB complex. RuvB forms 2 homohexamers on either side of HJ DNA bound by 1 or 2 RuvA tetramers; 4 subunits per hexamer contact DNA at a time. Coordinated motions by a converter formed by DNA-disengaged RuvB subunits stimulates ATP hydrolysis and nucleotide exchange. Immobilization of the converter enables RuvB to convert the ATP-contained energy into a lever motion, pulling 2 nucleotides of DNA out of the RuvA tetramer per ATP hydrolyzed, thus driving DNA branch migration. The RuvB motors rotate together with the DNA substrate, which together with the progressing nucleotide cycle form the mechanistic basis for DNA recombination by continuous HJ branch migration. Branch migration allows RuvC to scan DNA until it finds its consensus sequence, where it cleaves and resolves cruciform DNA. The sequence is that of Holliday junction branch migration complex subunit RuvB from Synechococcus sp. (strain CC9605).